Consider the following 166-residue polypeptide: Large ribosomal subunit protein uL10 (166 aa).

It belongs to the universal ribosomal protein uL10 family. As to quaternary structure, part of the ribosomal stalk of the 50S ribosomal subunit. The N-terminus interacts with L11 and the large rRNA to form the base of the stalk. The C-terminus forms an elongated spine to which L12 dimers bind in a sequential fashion forming a multimeric L10(L12)X complex.

In terms of biological role, forms part of the ribosomal stalk, playing a central role in the interaction of the ribosome with GTP-bound translation factors. This chain is Large ribosomal subunit protein uL10, found in Aromatoleum aromaticum (strain DSM 19018 / LMG 30748 / EbN1) (Azoarcus sp. (strain EbN1)).